A 103-amino-acid chain; its full sequence is MYAVFQSGGKQHRVSEGQTVRLEKLDIATGETIEFAEVLMIANGEEVKIGVPFVDGGVIKAEVVAHGRGEKVKIVKFRRRKHYRKQQGHRQWFTDVKITGISA.

Belongs to the bacterial ribosomal protein bL21 family. Part of the 50S ribosomal subunit. Contacts protein L20.

This protein binds to 23S rRNA in the presence of protein L20. This Salmonella agona (strain SL483) protein is Large ribosomal subunit protein bL21.